The following is a 132-amino-acid chain: Small ribosomal subunit protein uS8 (132 aa).

This sequence belongs to the universal ribosomal protein uS8 family. As to quaternary structure, part of the 30S ribosomal subunit. Contacts proteins S5 and S12.

Its function is as follows. One of the primary rRNA binding proteins, it binds directly to 16S rRNA central domain where it helps coordinate assembly of the platform of the 30S subunit. The polypeptide is Small ribosomal subunit protein uS8 (Aliarcobacter butzleri (strain RM4018) (Arcobacter butzleri)).